The primary structure comprises 361 residues: Peptide chain release factor 1 (361 aa).

Q237 is modified (N5-methylglutamine). Residues 285 to 296 (DEKRRSAEESTR) are compositionally biased toward basic and acidic residues. Positions 285-305 (DEKRRSAEESTRRNLVSSGDR) are disordered.

The protein belongs to the prokaryotic/mitochondrial release factor family. Post-translationally, methylated by PrmC. Methylation increases the termination efficiency of RF1.

The protein localises to the cytoplasm. Peptide chain release factor 1 directs the termination of translation in response to the peptide chain termination codons UAG and UAA. The chain is Peptide chain release factor 1 from Shewanella halifaxensis (strain HAW-EB4).